The primary structure comprises 465 residues: FAD-dependent monooxygenase olcE (465 aa).

Residues 9-29 (IIIGGSVAGLTLALSLNKIGI) form a helical membrane-spanning segment. Positions 35, 49, 108, 308, and 321 each coordinate FAD.

Belongs to the paxM FAD-dependent monooxygenase family. Requires FAD as cofactor.

The protein resides in the membrane. The protein operates within secondary metabolite biosynthesis; terpenoid biosynthesis. Functionally, FAD-dependent monooxygenase; part of the gene cluster that mediates the biosynthesis of 15-deoxyoxalicine B. The first step of the pathway is the synthesis of nicotinyl-CoA from nicotinic acid by the nicotinic acid-CoA ligase olcI. Nicotinyl-CoA is then a substrate of polyketide synthase olcA to produce 4-hydroxy-6-(3-pyridinyl)-2H-pyran-2-one (HPPO) which is further prenylated by the polyprenyl transferase olcH to yield geranylgeranyl-HPPO. Geranylgeranyl pyrophosphate is provided by the cluster-specific geranylgeranyl pyrophosphate synthase olcC. The FAD-dependent monooxygenase olcE catalyzes the epoxidation of geranylgeranyl-HPPO and the terpene cyclase olcD catalyzes the cyclization of the terpenoid component, resulting in the formation of the tricyclic terpene moiety seen in predecaturin E. The cytochrome P450 monooxygenase then catalyzes the allylic oxidation of predecaturin E, which is followed by spirocylization with concomitant loss of one molecule of water to form decaturin E. Decaturin E is the substrate of the cytochrome P450 monooxygenase olcJ which hydroxylates it at the C-29 position to form decaturin F. The short-chain dehydrogenase/reductase olcF may catalyze the oxidation of decaturin F to generate the 29-hydroxyl-27-one intermediate, and subsequent hemiacetal formation probably leads to the formation of decaturin C. The dioxygenase olcK may be a peroxisomal enzyme that catalyzes the hydroxylation of decaturin C into decaturin A once decaturin C is shuttled into the peroxisome by the MFS transporter olcL. Finally the cytochrome P450 monooxygenase olcB catalyzes the oxidative rearrangement to yield 15-deoxyoxalicine B. In the absence of olcJ, decaturin E may be shunted to a pathway in which it is oxidized to a ketone, possibly by olcF, to form decaturin D, which undergoes further allylic oxidation to yield decaturin G. Moreover, in the absence of oclK or oclL, oclB can convert decaturin C into 15-deoxyoxalicine A. This Penicillium canescens protein is FAD-dependent monooxygenase olcE.